Reading from the N-terminus, the 394-residue chain is NAD(P)H-quinone oxidoreductase subunit H 2 (394 aa).

It belongs to the complex I 49 kDa subunit family. In terms of assembly, NDH-1 can be composed of about 15 different subunits; different subcomplexes with different compositions have been identified which probably have different functions.

It localises to the cell inner membrane. The enzyme catalyses a plastoquinone + NADH + (n+1) H(+)(in) = a plastoquinol + NAD(+) + n H(+)(out). It catalyses the reaction a plastoquinone + NADPH + (n+1) H(+)(in) = a plastoquinol + NADP(+) + n H(+)(out). Its function is as follows. NDH-1 shuttles electrons from an unknown electron donor, via FMN and iron-sulfur (Fe-S) centers, to quinones in the respiratory and/or the photosynthetic chain. The immediate electron acceptor for the enzyme in this species is believed to be plastoquinone. Couples the redox reaction to proton translocation, and thus conserves the redox energy in a proton gradient. Cyanobacterial NDH-1 also plays a role in inorganic carbon-concentration. In Gloeobacter violaceus (strain ATCC 29082 / PCC 7421), this protein is NAD(P)H-quinone oxidoreductase subunit H 2.